A 379-amino-acid polypeptide reads, in one-letter code: DnaJ homolog subfamily B member 14 (379 aa).

Residues 1 to 244 (MEGNRDEAEK…GHEREEERGD (244 aa)) lie on the Cytoplasmic side of the membrane. The tract at residues 55–94 (STAGNSPHCRKPSGSGDQSKPNCTKDSTSGSGEGGKGYTK) is disordered. Positions 69-84 (SGDQSKPNCTKDSTSG) are enriched in polar residues. Residues 108 to 172 (NYYEVLGVTK…EKRKQYDLTG (65 aa)) enclose the J domain. The disordered stretch occupies residues 219 to 241 (SNGRAGYSQQHQHRHSGHEREEE). Residues 245–265 (GGFSVFIQLMPIIVLILVSLL) traverse the membrane as a helical segment. Residues 266-379 (SQLMVSNPPY…ERLTSLYKGG (114 aa)) are Lumenal-facing.

This sequence belongs to the DnaJ family. DNAJB12/DNAJB14 subfamily. In terms of assembly, interacts (via J domain) with HSPA8/Hsc70. Forms a multiprotein complex, at least composed of DNAJB12, DNAJB14, HSPA8/Hsc70 and SGTA; interaction with DNAJB14 and HSPA8/Hsc70 is direct.

It is found in the endoplasmic reticulum membrane. Its subcellular location is the nucleus membrane. Acts as a co-chaperone with HSPA8/Hsc70; required to promote protein folding and trafficking, prevent aggregation of client proteins, and promote unfolded proteins to endoplasmic reticulum-associated degradation (ERAD) pathway. Acts by determining HSPA8/Hsc70's ATPase and polypeptide-binding activities. Can also act independently of HSPA8/Hsc70: together with DNAJB12, acts as a chaperone that promotes maturation of potassium channels KCND2 and KCNH2 by stabilizing nascent channel subunits and assembling them into tetramers. While stabilization of nascent channel proteins is dependent on HSPA8/Hsc70, the process of oligomerization of channel subunits is independent of HSPA8/Hsc70. When overexpressed, forms membranous structures together with DNAJB12 and HSPA8/Hsc70 within the nucleus; the role of these structures, named DJANGOs, is still unclear. Functionally, (Microbial infection) In case of infection by polyomavirus, involved in the virus endoplasmic reticulum membrane penetration and infection. The polypeptide is DnaJ homolog subfamily B member 14 (Homo sapiens (Human)).